The chain runs to 517 residues: Ribose import ATP-binding protein RbsA 1 (517 aa).

ABC transporter domains follow at residues 11-251 and 263-507; these read LEMR…VGRD and YDPG…ALAT. 43 to 50 is an ATP binding site; sequence GENGAGKS.

It belongs to the ABC transporter superfamily. Ribose importer (TC 3.A.1.2.1) family. The complex is composed of an ATP-binding protein (RbsA), two transmembrane proteins (RbsC) and a solute-binding protein (RbsB).

Its subcellular location is the cell inner membrane. The catalysed reaction is D-ribose(out) + ATP + H2O = D-ribose(in) + ADP + phosphate + H(+). Its function is as follows. Part of the ABC transporter complex RbsABC involved in ribose import. Responsible for energy coupling to the transport system. This chain is Ribose import ATP-binding protein RbsA 1, found in Burkholderia ambifaria (strain ATCC BAA-244 / DSM 16087 / CCUG 44356 / LMG 19182 / AMMD) (Burkholderia cepacia (strain AMMD)).